Consider the following 57-residue polypeptide: Large ribosomal subunit protein bL32c (57 aa).

The disordered stretch occupies residues methionine 1–lysine 21.

It belongs to the bacterial ribosomal protein bL32 family.

The protein resides in the plastid. It localises to the chloroplast. The polypeptide is Large ribosomal subunit protein bL32c (Stigeoclonium helveticum (Green alga)).